Consider the following 410-residue polypeptide: Arginine deiminase (410 aa).

Cys399 (amidino-cysteine intermediate) is an active-site residue.

The protein belongs to the arginine deiminase family.

The protein localises to the cytoplasm. The enzyme catalyses L-arginine + H2O = L-citrulline + NH4(+). Its pathway is amino-acid degradation; L-arginine degradation via ADI pathway; carbamoyl phosphate from L-arginine: step 1/2. This is Arginine deiminase from Listeria monocytogenes serotype 4a (strain HCC23).